A 216-amino-acid polypeptide reads, in one-letter code: Inactive ribonuclease-like protein 10 (216 aa).

A signal peptide spans 1–26 (MKLNLVQIFFMLLMLLLGLGMGLGLG). Residues 43–65 (EFWSSDSQDKAEATEEGDGTQTT) are disordered.

This sequence belongs to the pancreatic ribonuclease family. The N-terminus is blocked. Glycosylated.

The protein localises to the secreted. Functionally, secreted proximal epididymal protein required for post-testicular sperm maturation and male fertility. May be involved in sperm adhesion to the egg zona pellucida. Does not have ribonuclease activity. This Homo sapiens (Human) protein is Inactive ribonuclease-like protein 10 (RNASE10).